The sequence spans 112 residues: Protein 4.2 (112 aa).

Residues 64 to 93 (KPDGLNHQVTQGKKSHTQSQQTGPTTLTSD) form a disordered region. A compositionally biased stretch (polar residues) spans 70-92 (HQVTQGKKSHTQSQQTGPTTLTS).

This is Protein 4.2 from Escherichia phage T7 (Bacteriophage T7).